Consider the following 413-residue polypeptide: cAMP-dependent protein kinase regulatory subunit (413 aa).

A disordered region spans residues 1–145; that stretch reads MADSSSFPGT…DSWTPPCHPK (145 aa). The tract at residues 24-161 is dimerization and phosphorylation; that stretch reads SPIQKISEEE…RLKTAVSNNF (138 aa). A compositionally biased stretch (low complexity) spans 58–67; the sequence is GNSFNGDNGS. Positions 121 to 138 are enriched in polar residues; the sequence is TSVSAESLNPTSAGSDSW. Serine 122 is modified (phosphoserine). Residues 162 to 291, glutamate 240, arginine 249, 294 to 413, glutamate 361, and arginine 370 each bind 3',5'-cyclic AMP; these read LFSH…FLEE and LLSS…PSPS.

It belongs to the cAMP-dependent kinase regulatory chain family. In terms of assembly, tetramer, composed of 2 regulatory (R) and 2 catalytic (C) subunits. In the presence of cAMP it dissociates into 2 active monomeric C subunits and an R dimer.

In Aspergillus fumigatus (strain ATCC MYA-4609 / CBS 101355 / FGSC A1100 / Af293) (Neosartorya fumigata), this protein is cAMP-dependent protein kinase regulatory subunit (pkaR).